Reading from the N-terminus, the 275-residue chain is N-(5'-phosphoribosyl)anthranilate isomerase 2, chloroplastic (275 aa).

A chloroplast-targeting transit peptide spans 1 to 32 (MSTGISTDLHVHFGALNFSKTYKSGLSNRTVS).

Belongs to the TrpF family. In terms of tissue distribution, expressed in roots and shoots.

It is found in the plastid. The protein resides in the chloroplast. The enzyme catalyses N-(5-phospho-beta-D-ribosyl)anthranilate = 1-(2-carboxyphenylamino)-1-deoxy-D-ribulose 5-phosphate. It participates in amino-acid biosynthesis; L-tryptophan biosynthesis; L-tryptophan from chorismate: step 3/5. This Arabidopsis thaliana (Mouse-ear cress) protein is N-(5'-phosphoribosyl)anthranilate isomerase 2, chloroplastic (PAI2).